Consider the following 98-residue polypeptide: Cystatin-B (98 aa).

An N-acetylmethionine modification is found at Met-1. Positions 46-50 (QLVAG) match the Secondary area of contact motif.

Belongs to the cystatin family. As to quaternary structure, able to form dimers stabilized by noncovalent forces.

The protein resides in the cytoplasm. Functionally, this is an intracellular thiol proteinase inhibitor. The sequence is that of Cystatin-B (CSTB) from Ovis aries (Sheep).